The primary structure comprises 100 residues: MVLTNFFLRKKTSTTASIAKKRLHIIVTERKIDNTPELNYLPKFKKDLLRIIHQYIHEPKKISIQLQEQDNNAYMLQLTISFLTKNQDLINSKKQDNTTV.

This sequence belongs to the MinE family.

In terms of biological role, prevents the cell division inhibition by proteins MinC and MinD at internal division sites while permitting inhibition at polar sites. This ensures cell division at the proper site by restricting the formation of a division septum at the midpoint of the long axis of the cell. This is Cell division topological specificity factor from Blochmanniella floridana.